Consider the following 123-residue polypeptide: Small ribosomal subunit protein uS13 (123 aa).

The disordered stretch occupies residues 96–123 (GLPVRGQRTKTNARTRKGPKKTVAGKKK).

The protein belongs to the universal ribosomal protein uS13 family. Part of the 30S ribosomal subunit. Forms a loose heterodimer with protein S19. Forms two bridges to the 50S subunit in the 70S ribosome.

In terms of biological role, located at the top of the head of the 30S subunit, it contacts several helices of the 16S rRNA. In the 70S ribosome it contacts the 23S rRNA (bridge B1a) and protein L5 of the 50S subunit (bridge B1b), connecting the 2 subunits; these bridges are implicated in subunit movement. Contacts the tRNAs in the A and P-sites. The protein is Small ribosomal subunit protein uS13 of Nocardia farcinica (strain IFM 10152).